We begin with the raw amino-acid sequence, 574 residues long: Adenine deaminase (574 aa).

It belongs to the metallo-dependent hydrolases superfamily. Adenine deaminase family. Requires Mn(2+) as cofactor.

The enzyme catalyses adenine + H2O + H(+) = hypoxanthine + NH4(+). This Thermosipho melanesiensis (strain DSM 12029 / CIP 104789 / BI429) protein is Adenine deaminase.